The following is a 205-amino-acid chain: 7-methyl-GTP pyrophosphatase (205 aa).

D79 functions as the Proton acceptor in the catalytic mechanism.

It belongs to the Maf family. YceF subfamily. A divalent metal cation is required as a cofactor.

The protein resides in the cytoplasm. It catalyses the reaction N(7)-methyl-GTP + H2O = N(7)-methyl-GMP + diphosphate + H(+). Nucleoside triphosphate pyrophosphatase that hydrolyzes 7-methyl-GTP (m(7)GTP). May have a dual role in cell division arrest and in preventing the incorporation of modified nucleotides into cellular nucleic acids. This is 7-methyl-GTP pyrophosphatase from Paraburkholderia xenovorans (strain LB400).